We begin with the raw amino-acid sequence, 297 residues long: Protease HtpX homolog (297 aa).

The next 2 membrane-spanning stretches (helical) occupy residues 14–34 (IFLI…AGYL) and 39–59 (YQFG…SMIF). Residue His143 coordinates Zn(2+). Glu144 is a catalytic residue. His147 serves as a coordination point for Zn(2+). 2 helical membrane passes run 153–173 (IRIS…ASMG) and 196–216 (IVFL…ASMV). Zn(2+) is bound at residue Glu225.

The protein belongs to the peptidase M48B family. Zn(2+) serves as cofactor.

It localises to the cell membrane. The protein is Protease HtpX homolog of Streptococcus uberis (strain ATCC BAA-854 / 0140J).